The chain runs to 145 residues: D-aminoacyl-tRNA deacylase (145 aa).

The short motif at 137–138 (GP) is the Gly-cisPro motif, important for rejection of L-amino acids element.

This sequence belongs to the DTD family. In terms of assembly, homodimer.

The protein resides in the cytoplasm. The enzyme catalyses glycyl-tRNA(Ala) + H2O = tRNA(Ala) + glycine + H(+). It catalyses the reaction a D-aminoacyl-tRNA + H2O = a tRNA + a D-alpha-amino acid + H(+). In terms of biological role, an aminoacyl-tRNA editing enzyme that deacylates mischarged D-aminoacyl-tRNAs. Also deacylates mischarged glycyl-tRNA(Ala), protecting cells against glycine mischarging by AlaRS. Acts via tRNA-based rather than protein-based catalysis; rejects L-amino acids rather than detecting D-amino acids in the active site. By recycling D-aminoacyl-tRNA to D-amino acids and free tRNA molecules, this enzyme counteracts the toxicity associated with the formation of D-aminoacyl-tRNA entities in vivo and helps enforce protein L-homochirality. The chain is D-aminoacyl-tRNA deacylase from Idiomarina loihiensis (strain ATCC BAA-735 / DSM 15497 / L2-TR).